The sequence spans 227 residues: Cytochrome c oxidase subunit 2 (227 aa).

At 1 to 14 (MAHPAQLGLQDATS) the chain is on the mitochondrial intermembrane side. Residues 15–45 (PVMEELITFHDHALMAMSLISLLVLYALFST) form a helical membrane-spanning segment. Residues 46 to 59 (LTTKMTNTNITDAQ) lie on the Mitochondrial matrix side of the membrane. Residues 60-87 (EMETIWTILPAIILVLIAFPSLRILYMT) form a helical membrane-spanning segment. The Mitochondrial intermembrane portion of the chain corresponds to 88–227 (DEVNNPSFTI…IFEMGPVFTL (140 aa)). The Cu cation site is built by His-161, Cys-196, Glu-198, Cys-200, His-204, and Met-207. Residue Glu-198 participates in Mg(2+) binding.

It belongs to the cytochrome c oxidase subunit 2 family. Component of the cytochrome c oxidase (complex IV, CIV), a multisubunit enzyme composed of 14 subunits. The complex is composed of a catalytic core of 3 subunits MT-CO1, MT-CO2 and MT-CO3, encoded in the mitochondrial DNA, and 11 supernumerary subunits COX4I, COX5A, COX5B, COX6A, COX6B, COX6C, COX7A, COX7B, COX7C, COX8 and NDUFA4, which are encoded in the nuclear genome. The complex exists as a monomer or a dimer and forms supercomplexes (SCs) in the inner mitochondrial membrane with NADH-ubiquinone oxidoreductase (complex I, CI) and ubiquinol-cytochrome c oxidoreductase (cytochrome b-c1 complex, complex III, CIII), resulting in different assemblies (supercomplex SCI(1)III(2)IV(1) and megacomplex MCI(2)III(2)IV(2)). Found in a complex with TMEM177, COA6, COX18, COX20, SCO1 and SCO2. Interacts with TMEM177 in a COX20-dependent manner. Interacts with COX20. Interacts with COX16. Cu cation serves as cofactor.

It localises to the mitochondrion inner membrane. The enzyme catalyses 4 Fe(II)-[cytochrome c] + O2 + 8 H(+)(in) = 4 Fe(III)-[cytochrome c] + 2 H2O + 4 H(+)(out). Functionally, component of the cytochrome c oxidase, the last enzyme in the mitochondrial electron transport chain which drives oxidative phosphorylation. The respiratory chain contains 3 multisubunit complexes succinate dehydrogenase (complex II, CII), ubiquinol-cytochrome c oxidoreductase (cytochrome b-c1 complex, complex III, CIII) and cytochrome c oxidase (complex IV, CIV), that cooperate to transfer electrons derived from NADH and succinate to molecular oxygen, creating an electrochemical gradient over the inner membrane that drives transmembrane transport and the ATP synthase. Cytochrome c oxidase is the component of the respiratory chain that catalyzes the reduction of oxygen to water. Electrons originating from reduced cytochrome c in the intermembrane space (IMS) are transferred via the dinuclear copper A center (CU(A)) of subunit 2 and heme A of subunit 1 to the active site in subunit 1, a binuclear center (BNC) formed by heme A3 and copper B (CU(B)). The BNC reduces molecular oxygen to 2 water molecules using 4 electrons from cytochrome c in the IMS and 4 protons from the mitochondrial matrix. The polypeptide is Cytochrome c oxidase subunit 2 (MT-CO2) (Mandrillus leucophaeus (Drill)).